A 184-amino-acid polypeptide reads, in one-letter code: UPF0398 protein BAA_1648 (184 aa).

It belongs to the UPF0398 family.

In Bacillus anthracis (strain A0248), this protein is UPF0398 protein BAA_1648.